Consider the following 180-residue polypeptide: Large ribosomal subunit protein uL5 (180 aa).

It belongs to the universal ribosomal protein uL5 family. In terms of assembly, part of the 50S ribosomal subunit; part of the 5S rRNA/L5/L18/L25 subcomplex. Contacts the 5S rRNA and the P site tRNA. Forms a bridge to the 30S subunit in the 70S ribosome.

Functionally, this is one of the proteins that bind and probably mediate the attachment of the 5S RNA into the large ribosomal subunit, where it forms part of the central protuberance. In the 70S ribosome it contacts protein S13 of the 30S subunit (bridge B1b), connecting the 2 subunits; this bridge is implicated in subunit movement. Contacts the P site tRNA; the 5S rRNA and some of its associated proteins might help stabilize positioning of ribosome-bound tRNAs. The polypeptide is Large ribosomal subunit protein uL5 (Moorella thermoacetica (strain ATCC 39073 / JCM 9320)).